A 442-amino-acid chain; its full sequence is tRNA-2-methylthio-N(6)-dimethylallyladenosine synthase (442 aa).

Residues 2 to 120 enclose the MTTase N-terminal domain; that stretch reads KKVFIRTFGC…LPKMIVDKET (119 aa). Residues cysteine 11, cysteine 49, cysteine 83, cysteine 157, cysteine 161, and cysteine 164 each coordinate [4Fe-4S] cluster. The Radical SAM core domain maps to 143–375; it reads RVEGGAAFVS…NEVIEAETAR (233 aa). Residues 378–441 enclose the TRAM domain; that stretch reads QTMIGTVQRC…TFSLRGKIVE (64 aa).

The protein belongs to the methylthiotransferase family. MiaB subfamily. As to quaternary structure, monomer. [4Fe-4S] cluster is required as a cofactor.

The protein resides in the cytoplasm. It catalyses the reaction N(6)-dimethylallyladenosine(37) in tRNA + (sulfur carrier)-SH + AH2 + 2 S-adenosyl-L-methionine = 2-methylsulfanyl-N(6)-dimethylallyladenosine(37) in tRNA + (sulfur carrier)-H + 5'-deoxyadenosine + L-methionine + A + S-adenosyl-L-homocysteine + 2 H(+). Its function is as follows. Catalyzes the methylthiolation of N6-(dimethylallyl)adenosine (i(6)A), leading to the formation of 2-methylthio-N6-(dimethylallyl)adenosine (ms(2)i(6)A) at position 37 in tRNAs that read codons beginning with uridine. This chain is tRNA-2-methylthio-N(6)-dimethylallyladenosine synthase, found in Neisseria gonorrhoeae (strain ATCC 700825 / FA 1090).